The following is a 1320-amino-acid chain: CAP-Gly domain-containing linker protein 1 (1320 aa).

The interval methionine 1–glutamate 53 is disordered. Low complexity predominate over residues threonine 21–lysine 35. Serine 48 is subject to Phosphoserine. A Phosphothreonine modification is found at threonine 50. The CAP-Gly 1 domain maps to glycine 78 to arginine 120. The tract at residues glycine 97–glycine 101 is important for tubulin binding. Position 146 is a phosphoserine (serine 146). Polar residues predominate over residues valine 156–serine 171. A disordered region spans residues valine 156–threonine 181. Position 181 is a phosphothreonine (threonine 181). Phosphoserine is present on residues serine 194, serine 196, serine 199, and serine 203. Residues glycine 231–proline 273 enclose the CAP-Gly 2 domain. Low complexity predominate over residues threonine 301–arginine 331. A disordered region spans residues threonine 301–threonine 338. Position 309 is a phosphoserine (serine 309). Serine 311 is subject to Phosphoserine; by PKA. A phosphoserine mark is found at serine 314 and serine 347. A disordered region spans residues serine 1089–alanine 1109. Residues arginine 1096–alanine 1109 are compositionally biased toward basic and acidic residues. Residue serine 1116 is modified to Phosphoserine. The interval lysine 1178 to serine 1201 is disordered. The segment covering glutamine 1180–valine 1190 has biased composition (polar residues). Residue serine 1246 is modified to Phosphoserine. A CCHC-type zinc finger spans residues proline 1299–aspartate 1316.

As to quaternary structure, interacts with MTOR; phosphorylates and regulates CLIP1. Interacts (via CAP-Gly domains) with tubulin and TUBA1B. Interacts with SLAIN2. Interacts with MAPRE1 and MAPRE3. Interacts (via zinc finger) with DCTN1. Binds preferentially to tyrosinated microtubules, and only marginally to detyrosinated microtubules. Phosphorylated. Phosphorylation induces conformational changes by increasing the affinity of the N-terminus for C-terminus, resulting in inhibition of its function thus decreasing its binding to microtubules and DCTN1. Exhibits a folded, autoinhibited conformation when phosphorylated and an open conformation when dephosphorylated with increased binding affinity to microtubules and DCTN1. Phosphorylation regulates its recruitment to tyrosinated microtubules and the recruitment of vesicular cargo to microtubules in neurons. Phosphorylation by MTOR may positively regulate CLIP1 association with microtubules.

Its subcellular location is the cytoplasm. It is found in the cytoskeleton. It localises to the cytoplasmic vesicle membrane. The protein resides in the cell projection. The protein localises to the ruffle. In terms of biological role, binds to the plus end of microtubules and regulates the dynamics of the microtubule cytoskeleton. Promotes microtubule growth and microtubule bundling. Links cytoplasmic vesicles to microtubules and thereby plays an important role in intracellular vesicle trafficking. Plays a role macropinocytosis and endosome trafficking. This is CAP-Gly domain-containing linker protein 1 (Clip1) from Rattus norvegicus (Rat).